The primary structure comprises 62 residues: uncharacterized protein (62 aa).

2 helical membrane passes run 9-29 (HNEL…ALIG) and 42-62 (AAVV…LQLL).

It is found in the membrane. This is an uncharacterized protein from Saccharomyces cerevisiae (strain ATCC 204508 / S288c) (Baker's yeast).